Consider the following 839-residue polypeptide: LPS-assembly protein LptD (839 aa).

Residues 1-21 (MAIGITACVLSLINYQGLAYS) form the signal peptide.

Belongs to the LptD family. In terms of assembly, component of the lipopolysaccharide transport and assembly complex. Interacts with LptE and LptA.

The protein localises to the cell outer membrane. Its function is as follows. Together with LptE, is involved in the assembly of lipopolysaccharide (LPS) at the surface of the outer membrane. This Legionella pneumophila (strain Paris) protein is LPS-assembly protein LptD.